The chain runs to 258 residues: MLALISPAKTLDYESTLPTDKHTLPRLLDQSQALIDYCRSLSASEIASLMSVSEKIAKLNAERFQDWTSELTLANARQAIFAFKGDVYTGLDAYHLQENDFEFAQKHLRMLSGLYGLLRPLDLMMPYRLEMGTKLHNSRGHNLYEFWDDRITRLINEDLEQTNSKILVNIASDEYYKSVKEQKINAQIVKPVFLDQKNGKYKVISFYAKKARGLMARFIIENKLENAEDLKAFNSEGYYFDLENSNQHELVFKRDEQA.

It belongs to the UPF0246 family.

The chain is UPF0246 protein ACIAD2218 from Acinetobacter baylyi (strain ATCC 33305 / BD413 / ADP1).